The chain runs to 172 residues: L-amino acid N-acyltransferase MnaT (172 aa).

Residues 1–163 (MSIRFARKAD…DLTFMQLQLD (163 aa)) form the N-acetyltransferase domain. Acetyl-CoA is bound by residues 85–87 (VYV), 93–98 (GKGLGR), Asn-124, and Ser-133.

It belongs to the acetyltransferase family. PAT/BAR subfamily.

It carries out the reaction L-methionine + acetyl-CoA = N-acetyl-L-methionine + CoA + H(+). The catalysed reaction is propanoyl-CoA + L-methionine = N-propanoyl-L-methioninate + CoA + H(+). It catalyses the reaction L-alpha-phenylglycine + acetyl-CoA = N-acetyl-L-alpha-phenylglycine + CoA + H(+). The enzyme catalyses L-methionine sulfoximine + acetyl-CoA = N-acetyl-L-methionine sulfoximine + CoA + H(+). It carries out the reaction L-methionine sulfone + acetyl-CoA = N-acetyl-L-methionine sulfone + CoA + H(+). In terms of biological role, acyltransferase that appears to be required for E.coli optimal growth rate and yield via the formation of N-acetylated amino acids. Catalyzes the acylation of L-methionine using acetyl-CoA or propanoyl-CoA as acyl donors, and the acetylation of L-phenylglycine. Is also able to N-acylate other free L-amino acids and their derivatives using a CoA thioester as cosubstrate. Using acetyl-CoA as an acyl donor, substrate specificity is methionine sulfone &gt; methionine sulfoximine &gt; methionine sulfoxide &gt; methionine. Asparagine, lysine, glutamine, aspartate and glutamate are very poor substrates. Using methionine as a substrate, acyl donor preference is propanoyl-CoA &gt; acetyl-CoA &gt;&gt; butyryl-CoA. Likely plays a role in the resistance against the toxic effects of L-methionine sulfoximine (MSX), via its ability to catalyze its acetylation; MSX is a rare amino acid which inhibits glutamine synthetase (GlnA). The protein is L-amino acid N-acyltransferase MnaT of Escherichia coli (strain K12).